Consider the following 525-residue polypeptide: uncharacterized protein (525 aa).

Helical transmembrane passes span 7 to 29 (FLATHQLLTILIVLASGALLGQI), 34 to 51 (LRFGAAGALFMGLVVGAL), 64 to 82 (GLGVVLFCYTVGLAAGSTF), 92 to 114 (LMLAGVVGLAVMAAAGLGLGRLF), 121 to 143 (VAGLYAGVLTSPAIDAASMATHG), and 148 to 170 (LVGYALSYPVGVVVGLIMVAIIA). RCK C-terminal domains follow at residues 178–257 (KDNT…LGHV) and 259–341 (ERTL…LFGD). Helical transmembrane passes span 351–370 (ALSLGLGAALGLLLGALMVA), 374–396 (GLQFELGTAAGPLVMGMILGSIH), 416–438 (LGLMIFLACVGLASGPAFLSQAV), 443–465 (LAVIAVSAVTLVLGGAIVIAAAW), and 502–524 (SAYGALFALGTVVKILLVQVIVL).

Belongs to the AAE transporter (TC 2.A.81) family.

Its subcellular location is the cell membrane. This is an uncharacterized protein from Cutibacterium acnes (strain DSM 16379 / KPA171202) (Propionibacterium acnes).